Consider the following 190-residue polypeptide: Dynactin subunit 6 (190 aa).

A Phosphothreonine modification is found at Thr-186.

The protein belongs to the dynactin subunits 5/6 family. Dynactin subunit 6 subfamily. As to quaternary structure, subunit of dynactin, a multiprotein complex part of a tripartite complex with dynein and a adapter, such as BICDL1, BICD2 or HOOK3. The dynactin complex is built around ACTR1A/ACTB filament and consists of an actin-related filament composed of a shoulder domain, a pointed end and a barbed end. Its length is defined by its flexible shoulder domain. The soulder is composed of 2 DCTN1 subunits, 4 DCTN2 and 2 DCTN3. The 4 DCNT2 (via N-terminus) bind the ACTR1A filament and act as molecular rulers to determine the length. The pointed end is important for binding dynein-dynactin cargo adapters. Consists of 4 subunits: ACTR10, DCNT4, DCTN5 and DCTN6. Within the complex DCTN6 forms a heterodimer with DCTN5. The barbed end is composed of a CAPZA1:CAPZB heterodimers, which binds ACTR1A/ACTB filament and dynactin and stabilizes dynactin. Interacts with PLK1. Interacts with N4BP2L1. In terms of processing, phosphorylation at Thr-186 by CDK1 during mitotic prometaphase creates a binding site for PLK1 that facilitates its recruitment to kinetochores.

The protein localises to the cytoplasm. It is found in the cytoskeleton. The protein resides in the chromosome. Its subcellular location is the centromere. It localises to the kinetochore. Its function is as follows. Part of the dynactin complex that activates the molecular motor dynein for ultra-processive transport along microtubules. The protein is Dynactin subunit 6 (DCTN6) of Sus scrofa (Pig).